The chain runs to 938 residues: LPS-assembly protein LptD (938 aa).

The first 33 residues, 1 to 33 (MAVKHPAFRKKFPLLVTGSLLALQPAFSLQSFA), serve as a signal peptide directing secretion. Residues 52–96 (KTATSALPPRPQHSRSAVSTTSGSATATATKQEPAPVLVTESKGR) are disordered. Over residues 65-81 (SRSAVSTTSGSATATAT) the composition is skewed to low complexity.

It belongs to the LptD family. As to quaternary structure, component of the lipopolysaccharide transport and assembly complex. Interacts with LptE and LptA.

The protein resides in the cell outer membrane. Functionally, together with LptE, is involved in the assembly of lipopolysaccharide (LPS) at the surface of the outer membrane. This Ectopseudomonas mendocina (strain ymp) (Pseudomonas mendocina) protein is LPS-assembly protein LptD.